The following is a 436-amino-acid chain: Phosphoribosylamine--glycine ligase (436 aa).

In terms of domain architecture, ATP-grasp spans 106–318 (RKLFEDYDIE…LADVCQAIVD (213 aa)). ATP is bound at residue 133-196 (LDDFDRDVVV…EERLIGEEFT (64 aa)). 3 residues coordinate Mg(2+): Gln-276, Glu-288, and Asn-290. Mn(2+) is bound by residues Gln-276, Glu-288, and Asn-290.

It belongs to the GARS family. Mg(2+) is required as a cofactor. It depends on Mn(2+) as a cofactor.

It catalyses the reaction 5-phospho-beta-D-ribosylamine + glycine + ATP = N(1)-(5-phospho-beta-D-ribosyl)glycinamide + ADP + phosphate + H(+). The protein operates within purine metabolism; IMP biosynthesis via de novo pathway; N(1)-(5-phospho-D-ribosyl)glycinamide from 5-phospho-alpha-D-ribose 1-diphosphate: step 2/2. In Methanobrevibacter smithii (strain ATCC 35061 / DSM 861 / OCM 144 / PS), this protein is Phosphoribosylamine--glycine ligase.